The chain runs to 145 residues: MASKSSISPLLLATVLVSVFAAATATGPYCYAGMGLPINPLEGCREYVAQQTCGISISGSAVSTEPGNTPRDRCCKELYDASQHCRCEAVRYFIGRRSDPNSSVLKDLPGCPREPQRDFAKVLVTSGHCNVMTVHNAPYCLGLDI.

An N-terminal signal peptide occupies residues 1–25; sequence MASKSSISPLLLATVLVSVFAAATA.

It belongs to the protease inhibitor I6 (cereal trypsin/alpha-amylase inhibitor) family. In terms of assembly, subunit of the tetrameric inhibitor. Endosperm.

The protein resides in the secreted. Alpha-amylase/trypsin inhibitor. It could be involved in insect defense mechanisms. The chain is Alpha-amylase/trypsin inhibitor CM1 from Triticum aestivum (Wheat).